Reading from the N-terminus, the 341-residue chain is HTH-type transcriptional repressor PurR (341 aa).

Residues 2–56 form the HTH lacI-type domain; it reads ATIKDVAKRANVSTTTVSHVINKTRFVAEETRNAVWAAIKELHYSPSAVARSLKV. The segment at residues 4 to 23 is a DNA-binding region (H-T-H motif); sequence IKDVAKRANVSTTTVSHVIN. The DNA-binding element occupies 48 to 56; sequence SAVARSLKV. The hypoxanthine site is built by Tyr-73, Arg-190, Thr-192, Phe-221, and Asp-275.

Homodimer.

The protein operates within purine metabolism; purine nucleotide biosynthesis [regulation]. In terms of biological role, is the main repressor of the genes involved in the de novo synthesis of purine nucleotides, regulating purB, purC, purEK, purF, purHD, purL, purMN and guaBA expression. PurR is allosterically activated to bind its cognate DNA by binding the purine corepressors, hypoxanthine or guanine, thereby effecting transcription repression. The protein is HTH-type transcriptional repressor PurR of Klebsiella pneumoniae subsp. pneumoniae (strain ATCC 700721 / MGH 78578).